The chain runs to 303 residues: Elongation factor Ts (303 aa).

Residues Thr82–Val85 are involved in Mg(2+) ion dislocation from EF-Tu.

Belongs to the EF-Ts family.

It localises to the cytoplasm. Its function is as follows. Associates with the EF-Tu.GDP complex and induces the exchange of GDP to GTP. It remains bound to the aminoacyl-tRNA.EF-Tu.GTP complex up to the GTP hydrolysis stage on the ribosome. The chain is Elongation factor Ts from Clostridioides difficile (strain 630) (Peptoclostridium difficile).